An 882-amino-acid polypeptide reads, in one-letter code: DNA mismatch repair protein MutS (882 aa).

627 to 634 is a binding site for ATP; it reads GPNMAGKS.

This sequence belongs to the DNA mismatch repair MutS family.

Its function is as follows. This protein is involved in the repair of mismatches in DNA. It is possible that it carries out the mismatch recognition step. This protein has a weak ATPase activity. In Anaeromyxobacter dehalogenans (strain 2CP-1 / ATCC BAA-258), this protein is DNA mismatch repair protein MutS.